The following is a 64-amino-acid chain: Large ribosomal subunit protein eL37 (64 aa).

The Zn(2+) site is built by Cys20, Cys23, Cys35, and Cys38. The segment at 20–38 (CRRCGRRSFHVRKKVCAAC) adopts a C4-type zinc-finger fold.

This sequence belongs to the eukaryotic ribosomal protein eL37 family. Zn(2+) serves as cofactor.

Functionally, binds to the 23S rRNA. This chain is Large ribosomal subunit protein eL37, found in Methanococcus maripaludis (strain C5 / ATCC BAA-1333).